The chain runs to 290 residues: Ribonuclease HIII (290 aa).

Residues Leu78–Ala290 enclose the RNase H type-2 domain. A divalent metal cation-binding residues include Asp84, Glu85, and Asp187.

This sequence belongs to the RNase HII family. RnhC subfamily. Requires Mn(2+) as cofactor. Mg(2+) serves as cofactor.

Its subcellular location is the cytoplasm. It catalyses the reaction Endonucleolytic cleavage to 5'-phosphomonoester.. Functionally, endonuclease that specifically degrades the RNA of RNA-DNA hybrids. This Streptococcus pneumoniae serotype 2 (strain D39 / NCTC 7466) protein is Ribonuclease HIII.